We begin with the raw amino-acid sequence, 246 residues long: Ribosome maturation factor RimM (246 aa).

Residues 1 to 15 (MKRKQESKGAGEKRQ) show a composition bias toward basic and acidic residues. The interval 1 to 63 (MKRKQESKGA…NPQFTTPNPD (63 aa)) is disordered. A compositionally biased stretch (pro residues) spans 45–54 (VPSPQSPIPN). The PRC barrel domain maps to 158-239 (GEDEYHVVDL…RIEITPPPGL (82 aa)).

It belongs to the RimM family. In terms of assembly, binds ribosomal protein uS19.

It localises to the cytoplasm. Functionally, an accessory protein needed during the final step in the assembly of 30S ribosomal subunit, possibly for assembly of the head region. Essential for efficient processing of 16S rRNA. May be needed both before and after RbfA during the maturation of 16S rRNA. It has affinity for free ribosomal 30S subunits but not for 70S ribosomes. The protein is Ribosome maturation factor RimM of Nostoc sp. (strain PCC 7120 / SAG 25.82 / UTEX 2576).